A 445-amino-acid chain; its full sequence is Putative U-box domain-containing protein 47 (445 aa).

A U-box domain is found at 64-137 (EVPKEFICTL…KEWCLIHNFD (74 aa)).

It catalyses the reaction S-ubiquitinyl-[E2 ubiquitin-conjugating enzyme]-L-cysteine + [acceptor protein]-L-lysine = [E2 ubiquitin-conjugating enzyme]-L-cysteine + N(6)-ubiquitinyl-[acceptor protein]-L-lysine.. The protein operates within protein modification; protein ubiquitination. Functionally, functions as an E3 ubiquitin ligase. The sequence is that of Putative U-box domain-containing protein 47 (PUB47) from Arabidopsis thaliana (Mouse-ear cress).